Reading from the N-terminus, the 199-residue chain is MSSVPVIPQARGLRHTGPVTVAVVSGPTAVGKGTVVGALLRSHPEIVVSRSVTTRPPRPTERDGIDYDFITPEQFDKLVDGEGLLEWATVHNSHRYGTPRGPVERAVADNRTVVLEIDLQGARQVRETYPQATQIFLAPPSWEELVHRLIGRGTETPEQQKQRLETAKVELANADEFDAVVVNDTVDHAVAHLVELLSL.

Positions V19–S198 constitute a Guanylate kinase-like domain. G26–G33 serves as a coordination point for ATP.

It belongs to the guanylate kinase family.

It is found in the cytoplasm. The catalysed reaction is GMP + ATP = GDP + ADP. Essential for recycling GMP and indirectly, cGMP. This chain is Guanylate kinase, found in Cutibacterium acnes (strain DSM 16379 / KPA171202) (Propionibacterium acnes).